A 1568-amino-acid chain; its full sequence is Plexin-C1 (1568 aa).

An N-terminal signal peptide occupies residues 1 to 34 (MEVSRRKAPPRPPRPAAPLPLLAYLLALAAPGRG). In terms of domain architecture, Sema spans 35 to 452 (ADEPVWRSEQ…AGKEVRRIRV (418 aa)). At 35 to 944 (ADEPVWRSEQ…YVEQESVPST (910 aa)) the chain is on the extracellular side. Residues cysteine 64 and cysteine 87 are joined by a disulfide bond. Asparagine 86, asparagine 141, and asparagine 149 each carry an N-linked (GlcNAc...) asparagine glycan. 3 disulfide bridges follow: cysteine 156–cysteine 194, cysteine 226–cysteine 354, and cysteine 283–cysteine 329. Residues asparagine 241 and asparagine 252 are each glycosylated (N-linked (GlcNAc...) asparagine). 2 N-linked (GlcNAc...) asparagine glycosylation sites follow: asparagine 386 and asparagine 407. 4 disulfide bridges follow: cysteine 455–cysteine 472, cysteine 461–cysteine 506, cysteine 464–cysteine 481, and cysteine 475–cysteine 487. N-linked (GlcNAc...) asparagine glycans are attached at residues asparagine 548, asparagine 582, asparagine 653, asparagine 692, asparagine 771, asparagine 796, asparagine 821, asparagine 871, and asparagine 890. Residues 945–965 (WYFLIVLPVLLVIVIFAAVGV) traverse the membrane as a helical segment. The Cytoplasmic portion of the chain corresponds to 966-1568 (TRHKSKELSR…FDEKKKCKWM (603 aa)). At serine 978 the chain carries Phosphoserine.

Belongs to the plexin family. In terms of assembly, monomer. Homodimer. Interacts with SEMA7A. N-glycosylated. In terms of tissue distribution, detected in heart, brain, lung, spleen and placenta.

The protein localises to the membrane. In terms of biological role, receptor for SEMA7A, for smallpox semaphorin A39R, vaccinia virus semaphorin A39R and for herpesvirus Sema protein. Binding of semaphorins triggers cellular responses leading to the rearrangement of the cytoskeleton and to secretion of IL6 and IL8. In Homo sapiens (Human), this protein is Plexin-C1 (PLXNC1).